Reading from the N-terminus, the 374-residue chain is o-succinylbenzoate synthase (374 aa).

Lysine 164 serves as the catalytic Proton donor. Aspartate 189, glutamate 214, and aspartate 239 together coordinate Mg(2+). Lysine 263 serves as the catalytic Proton acceptor.

This sequence belongs to the mandelate racemase/muconate lactonizing enzyme family. MenC type 2 subfamily. As to quaternary structure, homodimer. The cofactor is a divalent metal cation.

The catalysed reaction is (1R,6R)-6-hydroxy-2-succinyl-cyclohexa-2,4-diene-1-carboxylate = 2-succinylbenzoate + H2O. Its pathway is quinol/quinone metabolism; 1,4-dihydroxy-2-naphthoate biosynthesis; 1,4-dihydroxy-2-naphthoate from chorismate: step 4/7. It functions in the pathway quinol/quinone metabolism; menaquinone biosynthesis. Functionally, converts 2-succinyl-6-hydroxy-2,4-cyclohexadiene-1-carboxylate (SHCHC) to 2-succinylbenzoate (OSB). Also acts as a N-succinylamino acid racemase (NSAR) that catalyzes the racemization of N-succinyl-L-phenylglycine. L.innocua has the menaquinone synthesis pathway, indicating that the species requires OSBS activity. However, the NSAR/OSBS is not encoded in the menaquinone operon, raising the possibility that both NSAR and OSBS are biological functions. This is o-succinylbenzoate synthase from Listeria innocua serovar 6a (strain ATCC BAA-680 / CLIP 11262).